Consider the following 1377-residue polypeptide: DNA-directed RNA polymerase subunit beta' (1377 aa).

Zn(2+) contacts are provided by C70, C72, C85, and C88. Positions 460, 462, and 464 each coordinate Mg(2+). Residues C808, C882, C889, and C892 each coordinate Zn(2+).

It belongs to the RNA polymerase beta' chain family. In terms of assembly, the RNAP catalytic core consists of 2 alpha, 1 beta, 1 beta' and 1 omega subunit. When a sigma factor is associated with the core the holoenzyme is formed, which can initiate transcription. The cofactor is Mg(2+). It depends on Zn(2+) as a cofactor.

The enzyme catalyses RNA(n) + a ribonucleoside 5'-triphosphate = RNA(n+1) + diphosphate. Its function is as follows. DNA-dependent RNA polymerase catalyzes the transcription of DNA into RNA using the four ribonucleoside triphosphates as substrates. The protein is DNA-directed RNA polymerase subunit beta' of Geotalea uraniireducens (strain Rf4) (Geobacter uraniireducens).